The sequence spans 195 residues: MGGIFSKGYLPELPNGSLIKLGIIGLENSGKTTLLNKFIDASSKKSIASVLISTGVYIESIIFKGWEIFAGDLLYPNYISKIYKPYLLGSDVIIFMIDSSDIHQMTEAKNQIDLLIQEQCINSSVFLVMANKQDQKRCVSIHQLEQYLELYRLTNPWKCLPLSLIQEKGIEDLIKWILENTVVRKTYNNQLQTLQ.

Residue G2 is the site of N-myristoyl glycine attachment. GTP is bound by residues 25–32 (GLENSGKT), 72–76 (DLLYP), and 131–134 (NKQD).

The protein belongs to the small GTPase superfamily. Arf family.

May be involved in trafficking events within the endosomal system. The chain is ADP-ribosylation factor L (arrL) from Dictyostelium discoideum (Social amoeba).